The chain runs to 273 residues: Glucosamine-6-phosphate deaminase (273 aa).

D72 functions as the Proton acceptor; for enolization step in the catalytic mechanism. D141 serves as the catalytic For ring-opening step. Catalysis depends on H143, which acts as the Proton acceptor; for ring-opening step. E148 acts as the For ring-opening step in catalysis.

This sequence belongs to the glucosamine/galactosamine-6-phosphate isomerase family. Homohexamer.

Its subcellular location is the cytoplasm. The catalysed reaction is alpha-D-glucosamine 6-phosphate + H2O = beta-D-fructose 6-phosphate + NH4(+). It functions in the pathway nucleotide-sugar biosynthesis; UDP-N-acetyl-alpha-D-glucosamine biosynthesis; alpha-D-glucosamine 6-phosphate from D-fructose 6-phosphate: step 1/1. Catalyzes the reversible conversion of alpha-D-glucosamine 6-phosphate (GlcN-6P) into beta-D-fructose 6-phosphate (Fru-6P) and ammonium ion, a regulatory reaction step in de novo uridine diphosphate-N-acetyl-alpha-D-glucosamine (UDP-GlcNAc) biosynthesis via hexosamine pathway. The sequence is that of Glucosamine-6-phosphate deaminase from Drosophila melanogaster (Fruit fly).